The chain runs to 92 residues: uncharacterized protein (92 aa).

This is an uncharacterized protein from Sulfolobus spindle-shape virus 1 (SSV1).